The chain runs to 173 residues: Protein GrpE (173 aa).

The span at 1–28 (MTEEEKTKSEAEEIEQNNKEEEQEKSVE) shows a compositional bias: basic and acidic residues. Residues 1–30 (MTEEEKTKSEAEEIEQNNKEEEQEKSVEEL) form a disordered region.

It belongs to the GrpE family. As to quaternary structure, homodimer.

The protein localises to the cytoplasm. Its function is as follows. Participates actively in the response to hyperosmotic and heat shock by preventing the aggregation of stress-denatured proteins, in association with DnaK and GrpE. It is the nucleotide exchange factor for DnaK and may function as a thermosensor. Unfolded proteins bind initially to DnaJ; upon interaction with the DnaJ-bound protein, DnaK hydrolyzes its bound ATP, resulting in the formation of a stable complex. GrpE releases ADP from DnaK; ATP binding to DnaK triggers the release of the substrate protein, thus completing the reaction cycle. Several rounds of ATP-dependent interactions between DnaJ, DnaK and GrpE are required for fully efficient folding. The protein is Protein GrpE of Methanosphaera stadtmanae (strain ATCC 43021 / DSM 3091 / JCM 11832 / MCB-3).